The primary structure comprises 359 residues: Peptide chain release factor 1 (359 aa).

Gln-235 carries the N5-methylglutamine modification.

It belongs to the prokaryotic/mitochondrial release factor family. In terms of processing, methylated by PrmC. Methylation increases the termination efficiency of RF1.

The protein resides in the cytoplasm. Its function is as follows. Peptide chain release factor 1 directs the termination of translation in response to the peptide chain termination codons UAG and UAA. The protein is Peptide chain release factor 1 of Chelativorans sp. (strain BNC1).